Reading from the N-terminus, the 419-residue chain is Enolase (419 aa).

Glutamine 160 is a (2R)-2-phosphoglycerate binding site. Residue glutamate 204 is the Proton donor of the active site. Residues aspartate 240, glutamate 283, and aspartate 309 each contribute to the Mg(2+) site. Positions 334, 363, 364, and 385 each coordinate (2R)-2-phosphoglycerate. Lysine 334 serves as the catalytic Proton acceptor.

The protein belongs to the enolase family. Mg(2+) serves as cofactor.

The protein resides in the cytoplasm. It localises to the secreted. Its subcellular location is the cell surface. It carries out the reaction (2R)-2-phosphoglycerate = phosphoenolpyruvate + H2O. Its pathway is carbohydrate degradation; glycolysis; pyruvate from D-glyceraldehyde 3-phosphate: step 4/5. Catalyzes the reversible conversion of 2-phosphoglycerate (2-PG) into phosphoenolpyruvate (PEP). It is essential for the degradation of carbohydrates via glycolysis. In Pyrobaculum aerophilum (strain ATCC 51768 / DSM 7523 / JCM 9630 / CIP 104966 / NBRC 100827 / IM2), this protein is Enolase.